The following is a 1370-amino-acid chain: DNA-directed RNA polymerase subunit beta (1370 aa).

Belongs to the RNA polymerase beta chain family. The RNAP catalytic core consists of 2 alpha, 1 beta, 1 beta' and 1 omega subunit. When a sigma factor is associated with the core the holoenzyme is formed, which can initiate transcription.

It catalyses the reaction RNA(n) + a ribonucleoside 5'-triphosphate = RNA(n+1) + diphosphate. DNA-dependent RNA polymerase catalyzes the transcription of DNA into RNA using the four ribonucleoside triphosphates as substrates. In Geobacter sulfurreducens (strain ATCC 51573 / DSM 12127 / PCA), this protein is DNA-directed RNA polymerase subunit beta.